The chain runs to 155 residues: Endoribonuclease YbeY (155 aa).

His116, His120, and His126 together coordinate Zn(2+).

The protein belongs to the endoribonuclease YbeY family. It depends on Zn(2+) as a cofactor.

It localises to the cytoplasm. Functionally, single strand-specific metallo-endoribonuclease involved in late-stage 70S ribosome quality control and in maturation of the 3' terminus of the 16S rRNA. The protein is Endoribonuclease YbeY of Thermobifida fusca (strain YX).